Reading from the N-terminus, the 208-residue chain is MGMGSNGELKYEISQNAYIKLVLHSLRHKTAAVNGVLVGRISPKDDGVVEISDSVPLFHSNLALLPPLEISLIMIEEHYVAQGLSIVGYFHANERFDDVELCGVAKNIGDHISRYFPQAPILLLNNKKLEALSKGKERSPVMQLCVKDASKNWRVVGADGGSKLLLKEPSANVVLSDYISSEKWKDVTDVDDHLDDVTKDWLNPGLFN.

Residues 11–146 (YEISQNAYIK…ERSPVMQLCV (136 aa)) form the MPN domain.

The protein belongs to the EMC8/EMC9 family.

The chain is ER membrane protein complex subunit 8/9 homolog (EMB2731) from Arabidopsis thaliana (Mouse-ear cress).